A 497-amino-acid polypeptide reads, in one-letter code: MARAIMFQGTASHVGKSVLTLALARVLYLDGFKVAPFKAQNMALNSYVTLDGGEMGRAQVAQAEACGLEPRVEMNPVLLKPSSDKGSQVIVLGKPIGHYSAKSYHLERRSMVWEAVKKAYETLAQEFDFIVIEGAGSPAEVNLKASDIANMKTAFLANAPVILVADIDRGGALASLVGTMELLEPEERKMVCGFILNKFRGDLELLKPALTFLEEKTGIPVLGVMPYIPELLIPEEDSVSLEETVSNREKDLKIGVVWYPRISNFTDFEIFQYEPDVELIYIKTLQDFRDDFDLVILPGSKNTVADLNYLKQRGLDQKLYAYVEKGKPLIGICGGLQILGEKILDPDLVEGKETEVKALGILDTVTEFRGDKITRRTSTRVTRADGYFFLQREEISGYEIHHGRTFLSGERSDVLDNTENPLVFARGRVLGTYLHGLFDNDFFRHRLLNRLRREKGLDGIENRPTSLKNLRQENYDKIARVFRENVNLKKIYEILGI.

A GATase cobBQ-type domain is found at 251–443 (DLKIGVVWYP…LHGLFDNDFF (193 aa)). Cys333 functions as the Nucleophile in the catalytic mechanism. His435 is a catalytic residue.

Belongs to the CobB/CobQ family. CobQ subfamily.

The protein operates within cofactor biosynthesis; adenosylcobalamin biosynthesis. Catalyzes amidations at positions B, D, E, and G on adenosylcobyrinic A,C-diamide. NH(2) groups are provided by glutamine, and one molecule of ATP is hydrogenolyzed for each amidation. This Carboxydothermus hydrogenoformans (strain ATCC BAA-161 / DSM 6008 / Z-2901) protein is Cobyric acid synthase.